The chain runs to 318 residues: Basic leucine zipper (bZIP) transcription factor atfB (318 aa).

Residues 114–157 (FNSSPPEYAPPKHRSSLSEQSQTDGYGVSTRRRKASAIDQCEQQ) form a disordered region. The interval 160 to 199 (REKREKFLERNRLAASKCRQKKKEHTKLLETRFREVSNKK) is basic motif. In terms of domain architecture, bZIP spans 160–223 (REKREKFLER…LNLKNEMLRH (64 aa)). Residues 202 to 216 (LESEIEHLRSEVLNL) are leucine-zipper. The disordered stretch occupies residues 275–301 (DGPMQLPSEMGSPLDQRRDSEQSIMTE).

The protein belongs to the bZIP family. ATF subfamily.

The protein resides in the nucleus. Functionally, transcription factor that acts as a key player in the regulatory circuit that integrates secondary metabolism and cellular response to oxidative stress. Regulates the genes involved in development and stress response through direct binding to their promoters. Particularly involved in the resistance to oxidative stress in asexual conidiospores. This Aspergillus oryzae (strain ATCC 42149 / RIB 40) (Yellow koji mold) protein is Basic leucine zipper (bZIP) transcription factor atfB.